The sequence spans 237 residues: Lectin alpha chain (237 aa).

Residues E8 and D10 each coordinate Mn(2+). Residues D10, Y12, N14, and D19 each coordinate Ca(2+). Residues Y12 and N14 each coordinate a carbohydrate. Positions 19 and 24 each coordinate Mn(2+). 99-100 (LY) lines the a carbohydrate pocket. D208 contacts Ca(2+). R228 lines the a carbohydrate pocket.

This sequence belongs to the leguminous lectin family. In terms of assembly, homodimer and homotetramer. Oligomerization is pH-dependent with homotetramers forming at pH 4 and above.

D-mannose/D-glucose-binding lectin. Has anti-inflammatory activity in animal models when applied intravenously. Has antinociceptive activity in mice when applied intravenously. The protein is Lectin alpha chain of Canavalia boliviana.